We begin with the raw amino-acid sequence, 357 residues long: DNA integrity scanning protein DisA (357 aa).

In terms of domain architecture, DAC spans 8-146 (VKSMINILQL…GNLRYTLKDI (139 aa)). ATP-binding positions include Gly75, Leu93, and 106–110 (MRHRT).

Belongs to the DisA family. Homooctamer. Mg(2+) serves as cofactor.

The enzyme catalyses 2 ATP = 3',3'-c-di-AMP + 2 diphosphate. Participates in a DNA-damage check-point that is active prior to asymmetric division when DNA is damaged. DisA forms globular foci that rapidly scan along the chromosomes during sporulation, searching for lesions. When a lesion is present, DisA pauses at the lesion site. This triggers a cellular response that culminates in a temporary block in sporulation initiation. Functionally, also has diadenylate cyclase activity, catalyzing the condensation of 2 ATP molecules into cyclic di-AMP (c-di-AMP). c-di-AMP acts as a signaling molecule that couples DNA integrity with progression of sporulation. The rise in c-di-AMP level generated by DisA while scanning the chromosome, operates as a positive signal that advances sporulation; upon encountering a lesion, the DisA focus arrests at the damaged site and halts c-di-AMP synthesis. The protein is DNA integrity scanning protein DisA of Bacillus mycoides (strain KBAB4) (Bacillus weihenstephanensis).